The chain runs to 67 residues: uncharacterized protein (67 aa).

This is an uncharacterized protein from Thermoproteus tenax virus 1 (strain KRA1) (TTV1).